The chain runs to 150 residues: MALLHKEKLIECIDNELQNSGTLLLLTKNIVVSEISYNGNDYKYFTFNENHDLIGQENLKGATSNNIAKMVYNWIAKNPQTNKVWVGEPRIRIYFKNNLYHTNNNHVCIKDFYKVSISVSPNIFNDRSIWCTKCTSFYPFSSILSPNLFQ.

Belongs to the asfivirus A151R family. In terms of assembly, monomer. Homodimer. Interacts with protein B119L. Interacts with membrane protein E248R. The cofactor is Zn(2+).

In terms of biological role, may participate in a redox cascade for the formation of disulfide bonds in viral proteins. In African swine fever virus (isolate Pig/Kenya/KEN-50/1950) (ASFV), this protein is Protein A151R.